The sequence spans 745 residues: Phosphoribosylformylglycinamidine synthase subunit PurL (745 aa).

His47 is an active-site residue. Positions 50 and 90 each coordinate ATP. Glu92 lines the Mg(2+) pocket. Substrate is bound by residues 93–96 (SHNH) and Arg115. His94 (proton acceptor) is an active-site residue. Asp116 is a Mg(2+) binding site. Residue Gln240 coordinates substrate. Asp268 contributes to the Mg(2+) binding site. A substrate-binding site is contributed by 312–314 (ESQ). The ATP site is built by Asn501 and Gly538. Asn539 provides a ligand contact to Mg(2+). Ser541 is a substrate binding site.

This sequence belongs to the FGAMS family. In terms of assembly, monomer. Part of the FGAM synthase complex composed of 1 PurL, 1 PurQ and 2 PurS subunits.

It is found in the cytoplasm. The catalysed reaction is N(2)-formyl-N(1)-(5-phospho-beta-D-ribosyl)glycinamide + L-glutamine + ATP + H2O = 2-formamido-N(1)-(5-O-phospho-beta-D-ribosyl)acetamidine + L-glutamate + ADP + phosphate + H(+). Its pathway is purine metabolism; IMP biosynthesis via de novo pathway; 5-amino-1-(5-phospho-D-ribosyl)imidazole from N(2)-formyl-N(1)-(5-phospho-D-ribosyl)glycinamide: step 1/2. Part of the phosphoribosylformylglycinamidine synthase complex involved in the purines biosynthetic pathway. Catalyzes the ATP-dependent conversion of formylglycinamide ribonucleotide (FGAR) and glutamine to yield formylglycinamidine ribonucleotide (FGAM) and glutamate. The FGAM synthase complex is composed of three subunits. PurQ produces an ammonia molecule by converting glutamine to glutamate. PurL transfers the ammonia molecule to FGAR to form FGAM in an ATP-dependent manner. PurS interacts with PurQ and PurL and is thought to assist in the transfer of the ammonia molecule from PurQ to PurL. This is Phosphoribosylformylglycinamidine synthase subunit PurL from Leptospira interrogans serogroup Icterohaemorrhagiae serovar Lai (strain 56601).